We begin with the raw amino-acid sequence, 85 residues long: MSKNHLLQDPFLNELRKEKVPVSVFLVNGIKLHGIIDSFDQYVVMLKNSITQMVYKHAISTVVPSRMVKIPAEESSGEEEGTVAD.

The region spanning 9–68 (DPFLNELRKEKVPVSVFLVNGIKLHGIIDSFDQYVVMLKNSITQMVYKHAISTVVPSRMV) is the Sm domain.

The protein belongs to the Hfq family. As to quaternary structure, homohexamer.

In terms of biological role, RNA chaperone that binds small regulatory RNA (sRNAs) and mRNAs to facilitate mRNA translational regulation in response to envelope stress, environmental stress and changes in metabolite concentrations. Also binds with high specificity to tRNAs. This Legionella pneumophila (strain Paris) protein is RNA-binding protein Hfq.